The primary structure comprises 390 residues: Peroxisomal sarcosine oxidase (390 aa).

Position 9–39 (9–39 (DAIVIGAGIQGCFTAYHLAKHSKSVLLLEQF)) interacts with FAD. An N6-acetyllysine mark is found at K126 and K287. S-8alpha-FAD cysteine is present on C319. A Microbody targeting signal motif is present at residues 388–390 (AHL).

The protein belongs to the MSOX/MTOX family. The cofactor is FAD. Kidney and liver.

Its subcellular location is the peroxisome. It carries out the reaction sarcosine + O2 + H2O = formaldehyde + glycine + H2O2. The catalysed reaction is L-pipecolate + O2 = L-1-piperideine-6-carboxylate + H2O2 + H(+). Its function is as follows. Metabolizes sarcosine, L-pipecolic acid and L-proline. The protein is Peroxisomal sarcosine oxidase (Pipox) of Mus musculus (Mouse).